The primary structure comprises 234 residues: Small ribosomal subunit protein uS2 (234 aa).

The protein belongs to the universal ribosomal protein uS2 family.

This chain is Small ribosomal subunit protein uS2, found in Prochlorococcus marinus subsp. pastoris (strain CCMP1986 / NIES-2087 / MED4).